The sequence spans 81 residues: Small ribosomal subunit protein bS16 (81 aa).

Belongs to the bacterial ribosomal protein bS16 family.

In Teredinibacter turnerae (strain ATCC 39867 / T7901), this protein is Small ribosomal subunit protein bS16.